The following is a 435-amino-acid chain: Xylose isomerase (435 aa).

Residues H100 and D103 contribute to the active site. Residues E231, E267, H270, D295, D306, D308, and D338 each contribute to the Mg(2+) site.

This sequence belongs to the xylose isomerase family. As to quaternary structure, homotetramer. The cofactor is Mg(2+).

The protein localises to the cytoplasm. It catalyses the reaction alpha-D-xylose = alpha-D-xylulofuranose. This Brucella ovis (strain ATCC 25840 / 63/290 / NCTC 10512) protein is Xylose isomerase.